The primary structure comprises 179 residues: Cell division protein SepF (179 aa).

The interval 18-57 (EDSTVPYEKGNEPVFTPVNSSQEPDLPMNQPSQSAGAKDS) is disordered. Over residues 34–57 (PVNSSQEPDLPMNQPSQSAGAKDS) the composition is skewed to polar residues.

Belongs to the SepF family. Homodimer. Interacts with FtsZ.

The protein resides in the cytoplasm. Functionally, cell division protein that is part of the divisome complex and is recruited early to the Z-ring. Probably stimulates Z-ring formation, perhaps through the cross-linking of FtsZ protofilaments. Its function overlaps with FtsA. The chain is Cell division protein SepF from Streptococcus pneumoniae (strain Hungary19A-6).